The chain runs to 147 residues: Microtubule-associated protein 1 light chain 3 gamma (147 aa).

Residues serine 93 and serine 96 each carry the phosphoserine; by TBK1 modification. A lipid anchor (Phosphatidylethanolamine amidated glycine; alternate) is attached at glycine 126. Glycine 126 carries the Phosphatidylserine amidated glycine; alternate lipid modification. A propeptide spans 127-147 (removed in mature form); sequence CLESAAPRDGSSLEDRPCNPL.

The protein belongs to the ATG8 family. 3 different light chains, LC1 (a cleavage product of MAP1B), LC2 (a cleavage product of MAP1A) and LC3 (produced by one of the MAP1LC3 genes), can associate with the MAP1A or MAP1B heavy chains. Interacts with TP53INP1 and TP53INP2. Interacts with CALCOCO2. Interacts with TECPR2. Interacts with TBC1D5. Found in a complex with UBQLN1 and UBQLN2. Interacts with UBQLN4 (via STI1 1 and 2 domains). Interacts with UBQLN1 in the presence of UBQLN4. Interacts with TRIM5. Interacts with ATG13. Interacts with MEFV and TRIM21. Interacts with WDR81; recruits MAP1LC3C to ubiquitinated protein aggregates in the aggrephagy process. Interacts with MOAP1 (via LIR motif). Interacts with reticulophagy regulators RETREG1, RETREG2 and RETREG3. Interacts with TAX1BP1. Interacts with IRGM. Interacts with SPART. In terms of processing, the precursor molecule is cleaved by ATG4 (ATG4A, ATG4B, ATG4C or ATG4D) to expose the glycine at the C-terminus and form the cytosolic form, LC3-I. The processed form is then activated by APG7L/ATG7, transferred to ATG3 and conjugated to phosphatidylethanolamine (PE) phospholipid to form the membrane-bound form, LC3-II. During non-canonical autophagy, the processed form is conjugated to phosphatidylserine (PS) phospholipid. ATG4 proteins also mediate the delipidation of PE-conjugated forms. In addition, ATG4B and ATG4D mediate delipidation of ATG8 proteins conjugated to PS during non-canonical autophagy. Post-translationally, (Microbial infection) The Legionella effector RavZ is a deconjugating enzyme that hydrolyzes the amide bond between the C-terminal glycine residue and an adjacent aromatic residue in ATG8 proteins conjugated to phosphatidylethanolamine (PE), producing an ATG8 protein that is resistant to reconjugation by the host machinery due to the cleavage of the reactive C-terminal glycine. RavZ is also able to mediate delipidation of ATG8 proteins conjugated to phosphatidylserine (PS). Phosphorylation at Ser-96 and Ser-98 by TBK1 prevents interaction with ATG4 (ATG4A, ATG4B, ATG4C or ATG4D). Phosphorylation by TBK1 on autophagosomes prevents their delipidation by ATG4 and premature removal from nascent autophagosomes. Most abundant in placenta, lung and ovary.

It localises to the cytoplasmic vesicle. Its subcellular location is the autophagosome membrane. The protein resides in the endomembrane system. The protein localises to the cytoplasm. It is found in the cytoskeleton. Its function is as follows. Ubiquitin-like modifier that plays a crucial role in antibacterial autophagy (xenophagy) through the selective binding of CALCOCO2. Recruits all ATG8 family members to infecting bacteria such as S.typhimurium. May also play a role in aggrephagy, the macroautophagic degradation of ubiquitinated and aggregated proteins. The chain is Microtubule-associated protein 1 light chain 3 gamma (MAP1LC3C) from Homo sapiens (Human).